A 364-amino-acid chain; its full sequence is Putative galactoside 2-alpha-L-fucosyltransferase svh-11 (364 aa).

The Cytoplasmic segment spans residues 1–19 (MRLFHFLKFLTINNFSRYC). Residues 20–42 (LKIVKVHIIWITIICIIYFNWRF) form a helical; Signal-anchor for type II membrane protein membrane-spanning segment. The Lumenal segment spans residues 43 to 364 (KKLDFMAIPY…SANSFTVVRS (322 aa)). 2 N-linked (GlcNAc...) asparagine glycosylation sites follow: asparagine 60 and asparagine 128.

This sequence belongs to the glycosyltransferase 11 family.

It is found in the golgi apparatus. It localises to the golgi stack membrane. Its function is as follows. Mediates the transfer of fucose to the terminal galactose on glycan chains of cell surface glycoproteins and glycolipids. Required for axon regeneration after injury. This Caenorhabditis elegans protein is Putative galactoside 2-alpha-L-fucosyltransferase svh-11.